Consider the following 555-residue polypeptide: Serine/threonine-protein kinase AGC1-7 (555 aa).

The interval 1 to 126 (MLTKPGKKLD…PSKPHTGGDI (126 aa)) is disordered. Composition is skewed to basic and acidic residues over residues 7–16 (KKLDSSESTH) and 35–54 (PRKE…DNLI). The span at 84–118 (SQSNLNTKPNNNNSNNNSNMSSRSNSIESTSSNPS) shows a compositional bias: low complexity. The 335-residue stretch at 146–480 (FRLLKRLGYG…ATEIKQHPFF (335 aa)) folds into the Protein kinase domain. ATP is bound by residues 152 to 160 (LGYGDIGSV) and K175. D271 (proton acceptor) is an active-site residue. Residues 481–555 (EGVNWALIRS…DPDYIDFEYF (75 aa)) form the AGC-kinase C-terminal domain. The interval 514-547 (AAVDGGGKKNNNGAGGGCSTGGGDNKPNGDCNDP) is disordered. Gly residues predominate over residues 526–537 (GAGGGCSTGGGD).

This sequence belongs to the protein kinase superfamily. AGC Ser/Thr protein kinase family. As to quaternary structure, interacts with PDPK1/PDK1. In terms of processing, autophosphorylated and phosphorylated by PDPK1/PDK1. In terms of tissue distribution, specifically expressed in pollen grains.

The protein localises to the cytoplasm. It catalyses the reaction L-seryl-[protein] + ATP = O-phospho-L-seryl-[protein] + ADP + H(+). The enzyme catalyses L-threonyl-[protein] + ATP = O-phospho-L-threonyl-[protein] + ADP + H(+). Its activity is regulated as follows. Activated by PDPK1/PDK1. Functions redudantly with AGC1-5 as signaling component in the pollen tube. Required for polarized growth of pollen tubes. The protein is Serine/threonine-protein kinase AGC1-7 of Arabidopsis thaliana (Mouse-ear cress).